The chain runs to 165 residues: 6,7-dimethyl-8-ribityllumazine synthase (165 aa).

Residues F24, 62-64 (AFE), and 86-88 (AVI) each bind 5-amino-6-(D-ribitylamino)uracil. (2S)-2-hydroxy-3-oxobutyl phosphate is bound at residue 91-92 (DT). Catalysis depends on H94, which acts as the Proton donor. F119 is a 5-amino-6-(D-ribitylamino)uracil binding site. R133 lines the (2S)-2-hydroxy-3-oxobutyl phosphate pocket.

It belongs to the DMRL synthase family.

It catalyses the reaction (2S)-2-hydroxy-3-oxobutyl phosphate + 5-amino-6-(D-ribitylamino)uracil = 6,7-dimethyl-8-(1-D-ribityl)lumazine + phosphate + 2 H2O + H(+). Its pathway is cofactor biosynthesis; riboflavin biosynthesis; riboflavin from 2-hydroxy-3-oxobutyl phosphate and 5-amino-6-(D-ribitylamino)uracil: step 1/2. In terms of biological role, catalyzes the formation of 6,7-dimethyl-8-ribityllumazine by condensation of 5-amino-6-(D-ribitylamino)uracil with 3,4-dihydroxy-2-butanone 4-phosphate. This is the penultimate step in the biosynthesis of riboflavin. The protein is 6,7-dimethyl-8-ribityllumazine synthase of Prochlorococcus marinus (strain MIT 9303).